The chain runs to 227 residues: Phosphoribosylformylglycinamidine synthase subunit PurQ (227 aa).

Positions 2 to 226 constitute a Glutamine amidotransferase type-1 domain; the sequence is KFAVIQFPGS…VKAWKEEQVN (225 aa). The active-site Nucleophile is cysteine 86. Residues histidine 195 and glutamate 197 contribute to the active site.

Part of the FGAM synthase complex composed of 1 PurL, 1 PurQ and 2 PurS subunits.

It localises to the cytoplasm. It carries out the reaction N(2)-formyl-N(1)-(5-phospho-beta-D-ribosyl)glycinamide + L-glutamine + ATP + H2O = 2-formamido-N(1)-(5-O-phospho-beta-D-ribosyl)acetamidine + L-glutamate + ADP + phosphate + H(+). The catalysed reaction is L-glutamine + H2O = L-glutamate + NH4(+). It functions in the pathway purine metabolism; IMP biosynthesis via de novo pathway; 5-amino-1-(5-phospho-D-ribosyl)imidazole from N(2)-formyl-N(1)-(5-phospho-D-ribosyl)glycinamide: step 1/2. Functionally, part of the phosphoribosylformylglycinamidine synthase complex involved in the purines biosynthetic pathway. Catalyzes the ATP-dependent conversion of formylglycinamide ribonucleotide (FGAR) and glutamine to yield formylglycinamidine ribonucleotide (FGAM) and glutamate. The FGAM synthase complex is composed of three subunits. PurQ produces an ammonia molecule by converting glutamine to glutamate. PurL transfers the ammonia molecule to FGAR to form FGAM in an ATP-dependent manner. PurS interacts with PurQ and PurL and is thought to assist in the transfer of the ammonia molecule from PurQ to PurL. In Listeria monocytogenes serotype 4b (strain CLIP80459), this protein is Phosphoribosylformylglycinamidine synthase subunit PurQ.